The chain runs to 174 residues: Auxin-responsive protein IAA2 (174 aa).

An EAR-like (transcriptional repression) motif is present at residues 16 to 20 (LCLGL). Positions 44 to 67 (FEETRDEEESTPPTKTQIVGWPPV) are disordered. The PB1 domain maps to 77-164 (VSYVKVSMDG…SCKRLRIMKG (88 aa)).

This sequence belongs to the Aux/IAA family. In terms of assembly, homodimers and heterodimers. Interacts with the auxin-responsive protein IAA1. Interacts with TPL. In terms of tissue distribution, preferentially expressed in vegetative organs.

It is found in the nucleus. Its function is as follows. Aux/IAA proteins are short-lived transcriptional factors that function as repressors of early auxin response genes at low auxin concentrations. Repression is thought to result from the interaction with auxin response factors (ARFs), proteins that bind to the auxin-responsive promoter element (AuxRE). Formation of heterodimers with ARF proteins may alter their ability to modulate early auxin response genes expression. In Arabidopsis thaliana (Mouse-ear cress), this protein is Auxin-responsive protein IAA2 (IAA2).